The primary structure comprises 444 residues: Protein EVI2B (444 aa).

An N-terminal signal peptide occupies residues 1–23; the sequence is MEFKYLVFIVLCQYLDNTFFSET. Topologically, residues 24–203 are extracellular; it reads EAITTEQQSL…GTAHKNNHNA (180 aa). N-linked (GlcNAc...) asparagine glycosylation is found at Asn-63, Asn-94, Asn-104, and Asn-127. 2 stretches are compositionally biased toward polar residues: residues 104 to 131 and 160 to 171; these read NNSLPQTSPSGFTLTNQPSPSTYNSTGQ and THNQPTKSTPTI. The disordered stretch occupies residues 104-197; sequence NNSLPQTSPS…EPPSGKGTAH (94 aa). Residues 177-187 are compositionally biased toward pro residues; the sequence is TPPPPPPPLTS. The helical transmembrane segment at 204 to 224 threads the bilayer; it reads IAAILIGTIIISMLVAILMII. The Cytoplasmic segment spans residues 225–444; it reads LWKYLRKPVL…SLPPPPTELL (220 aa). Phosphothreonine is present on Thr-250. Phosphoserine is present on residues Ser-269, Ser-272, Ser-279, and Ser-295. 2 stretches are compositionally biased toward polar residues: residues 318 to 332 and 361 to 370; these read SEDSADGSTVGTAVS and SPLPNDSINP. Disordered regions lie at residues 318–337 and 361–444; these read SEDSADGSTVGTAVSSDDAD and SPLP…TELL.

In terms of tissue distribution, expressed in myeloid and lymphoid progenitors and increased in mature hematopoietic populations with the highest levels in granulocytes.

It is found in the membrane. Required for granulocyte differentiation and functionality of hematopoietic progenitor cells through the control of cell cycle progression and survival of hematopoietic progenitor cells. In Mus musculus (Mouse), this protein is Protein EVI2B.